The chain runs to 290 residues: Ribosomal RNA small subunit methyltransferase A (290 aa).

S-adenosyl-L-methionine contacts are provided by Asn-27, Leu-29, Gly-54, Glu-75, Asp-100, and Asn-125.

It belongs to the class I-like SAM-binding methyltransferase superfamily. rRNA adenine N(6)-methyltransferase family. RsmA subfamily.

It is found in the cytoplasm. The enzyme catalyses adenosine(1518)/adenosine(1519) in 16S rRNA + 4 S-adenosyl-L-methionine = N(6)-dimethyladenosine(1518)/N(6)-dimethyladenosine(1519) in 16S rRNA + 4 S-adenosyl-L-homocysteine + 4 H(+). Specifically dimethylates two adjacent adenosines (A1518 and A1519) in the loop of a conserved hairpin near the 3'-end of 16S rRNA in the 30S particle. May play a critical role in biogenesis of 30S subunits. In Streptococcus agalactiae serotype Ia (strain ATCC 27591 / A909 / CDC SS700), this protein is Ribosomal RNA small subunit methyltransferase A.